A 166-amino-acid polypeptide reads, in one-letter code: NAD(P)H-quinone oxidoreductase subunit I, chloroplastic (166 aa).

4Fe-4S ferredoxin-type domains lie at 55–84 and 95–124; these read GRIH…VDWK and LNYS…MTEE. [4Fe-4S] cluster-binding residues include C64, C67, C70, C74, C104, C107, C110, and C114.

It belongs to the complex I 23 kDa subunit family. NDH is composed of at least 16 different subunits, 5 of which are encoded in the nucleus. [4Fe-4S] cluster is required as a cofactor.

It is found in the plastid. The protein resides in the chloroplast thylakoid membrane. The catalysed reaction is a plastoquinone + NADH + (n+1) H(+)(in) = a plastoquinol + NAD(+) + n H(+)(out). It catalyses the reaction a plastoquinone + NADPH + (n+1) H(+)(in) = a plastoquinol + NADP(+) + n H(+)(out). Functionally, NDH shuttles electrons from NAD(P)H:plastoquinone, via FMN and iron-sulfur (Fe-S) centers, to quinones in the photosynthetic chain and possibly in a chloroplast respiratory chain. The immediate electron acceptor for the enzyme in this species is believed to be plastoquinone. Couples the redox reaction to proton translocation, and thus conserves the redox energy in a proton gradient. The polypeptide is NAD(P)H-quinone oxidoreductase subunit I, chloroplastic (Chaenactis santolinoides (Santolina pincushion)).